The chain runs to 461 residues: Ribosomal protein uS12 methylthiotransferase RimO (461 aa).

Residues 13 to 128 (PKVGFVSLGC…VMQHVHMHLP (116 aa)) form the MTTase N-terminal domain. Residues cysteine 22, cysteine 58, cysteine 87, cysteine 159, cysteine 163, and cysteine 166 each contribute to the [4Fe-4S] cluster site. The Radical SAM core domain maps to 145 to 390 (LTPRHYAYLK…MEVAEEVSAK (246 aa)). The TRAM domain occupies 393–461 (AKKVGKTLKV…ADGHDLWGEV (69 aa)).

The protein belongs to the methylthiotransferase family. RimO subfamily. The cofactor is [4Fe-4S] cluster.

It is found in the cytoplasm. It carries out the reaction L-aspartate(89)-[ribosomal protein uS12]-hydrogen + (sulfur carrier)-SH + AH2 + 2 S-adenosyl-L-methionine = 3-methylsulfanyl-L-aspartate(89)-[ribosomal protein uS12]-hydrogen + (sulfur carrier)-H + 5'-deoxyadenosine + L-methionine + A + S-adenosyl-L-homocysteine + 2 H(+). Catalyzes the methylthiolation of an aspartic acid residue of ribosomal protein uS12. The protein is Ribosomal protein uS12 methylthiotransferase RimO of Paraburkholderia xenovorans (strain LB400).